The primary structure comprises 237 residues: Uridylate kinase (237 aa).

An ATP-binding site is contributed by 9–12 (KLSG). Residue Gly-51 coordinates UMP. Gly-52 and Arg-56 together coordinate ATP. UMP is bound by residues Asp-71 and 132–139 (CGNPFFTT). The ATP site is built by Thr-159, Tyr-165, and Asp-168.

It belongs to the UMP kinase family. Homohexamer.

The protein resides in the cytoplasm. The catalysed reaction is UMP + ATP = UDP + ADP. It participates in pyrimidine metabolism; CTP biosynthesis via de novo pathway; UDP from UMP (UMPK route): step 1/1. Inhibited by UTP. Functionally, catalyzes the reversible phosphorylation of UMP to UDP. The sequence is that of Uridylate kinase from Prochlorococcus marinus (strain MIT 9303).